A 30-amino-acid polypeptide reads, in one-letter code: AELTSCFPVDHECDGGASNCNCCGDDVYCA.

2 disulfide bridges follow: Cys6/Cys23 and Cys13/Cys29.

Belongs to the neurotoxin 04 (omega-agtx) family. 02 (Tx1) subfamily. In terms of tissue distribution, expressed by the venom gland.

It localises to the secreted. In terms of biological role, lethal neurotoxin. Causes spastic paralysis and death in mice in 4-6 minutes after intracerebroventricular injection at dose levels of 1.5 ug per mouse. This Phoneutria keyserlingi (Brazilian wandering spider) protein is U5-ctenitoxin-Pk1b.